The sequence spans 460 residues: UDP-N-acetylmuramate--L-alanine ligase (460 aa).

ATP is bound at residue 118-124 (GAHGKTT).

This sequence belongs to the MurCDEF family.

The protein resides in the cytoplasm. It catalyses the reaction UDP-N-acetyl-alpha-D-muramate + L-alanine + ATP = UDP-N-acetyl-alpha-D-muramoyl-L-alanine + ADP + phosphate + H(+). It functions in the pathway cell wall biogenesis; peptidoglycan biosynthesis. Functionally, cell wall formation. This Clostridium botulinum (strain Alaska E43 / Type E3) protein is UDP-N-acetylmuramate--L-alanine ligase.